The sequence spans 117 residues: MPSIRVLFVLLAVILLFMEVKMTSAASIVKDVDEDETLENEDGEAMENSWPWHGVEDTSDYSDLSDLANSEKRGTCIDLGSRLYCKLIRRRGMCRSRSHRARIAMMRCERSCGRCHL.

The N-terminal stretch at 1 to 25 (MPSIRVLFVLLAVILLFMEVKMTSA) is a signal peptide. The propeptide occupies 26–73 (ASIVKDVDEDETLENEDGEAMENSWPWHGVEDTSDYSDLSDLANSEKR). Cystine bridges form between cysteine 76–cysteine 115, cysteine 85–cysteine 108, and cysteine 94–cysteine 112.

Belongs to the coral AMP family.

Its subcellular location is the secreted. Its function is as follows. Coral peptide that probably acts as an antimicrobial peptide in the surface mucous layer of planula larvae and likely also in adults. Shows moderate to high activity against some Gram-negative and Gram-positive bacteria (tested on E.coli, B.megaterium, S.aureus, E.aesturaii, B.algicola, Acinetobacter spec.). Does not show antibacterial activity against the coral pathogen V.coralliilyticus. The protein is Antimicrobial peptide AmAMP1 of Acropora millepora (Staghorn coral).